A 524-amino-acid polypeptide reads, in one-letter code: Cysteine--tRNA ligase (524 aa).

Position 29 (cysteine 29) interacts with Zn(2+). The short motif at 31–41 (PTVQAAPHVGH) is the 'HIGH' region element. The Zn(2+) site is built by cysteine 207, histidine 232, and glutamate 236. A compositionally biased stretch (low complexity) spans 246–258 (ARPASNAASADSP). The interval 246-273 (ARPASNAASADSPGPGGGEPGGGEPSSG) is disordered. The span at 259–270 (GPGGGEPGGGEP) shows a compositional bias: gly residues. The short motif at 291–295 (KMSKS) is the 'KMSKS' region element. ATP is bound at residue lysine 294.

Belongs to the class-I aminoacyl-tRNA synthetase family. In terms of assembly, monomer. Requires Zn(2+) as cofactor.

The protein localises to the cytoplasm. The catalysed reaction is tRNA(Cys) + L-cysteine + ATP = L-cysteinyl-tRNA(Cys) + AMP + diphosphate. In Frankia casuarinae (strain DSM 45818 / CECT 9043 / HFP020203 / CcI3), this protein is Cysteine--tRNA ligase.